The primary structure comprises 516 residues: UvrABC system protein C (516 aa).

Residues 9 to 87 (HLPGCYLFKD…IKKHWPRYNI (79 aa)) enclose the GIY-YIG domain. Positions 191–226 (GELIESMEKEMKKMAAKQMFEQAMALRDEISALEYL) constitute a UVR domain.

It belongs to the UvrC family. In terms of assembly, interacts with UvrB in an incision complex.

The protein resides in the cytoplasm. Its function is as follows. The UvrABC repair system catalyzes the recognition and processing of DNA lesions. UvrC both incises the 5' and 3' sides of the lesion. The N-terminal half is responsible for the 3' incision and the C-terminal half is responsible for the 5' incision. The sequence is that of UvrABC system protein C from Methanosarcina acetivorans (strain ATCC 35395 / DSM 2834 / JCM 12185 / C2A).